The following is a 145-amino-acid chain: Large ribosomal subunit protein uL24 (145 aa).

The interval 108–145 (EPIQEEQQKTEETKQEIAPEEVEAKEAQDKQEVKENDQ) is disordered. Residues 113-145 (EQQKTEETKQEIAPEEVEAKEAQDKQEVKENDQ) show a composition bias toward basic and acidic residues.

It belongs to the universal ribosomal protein uL24 family. In terms of assembly, part of the 50S ribosomal subunit.

Its function is as follows. One of two assembly initiator proteins, it binds directly to the 5'-end of the 23S rRNA, where it nucleates assembly of the 50S subunit. Located at the polypeptide exit tunnel on the outside of the subunit. In Thermoplasma volcanium (strain ATCC 51530 / DSM 4299 / JCM 9571 / NBRC 15438 / GSS1), this protein is Large ribosomal subunit protein uL24 (rpl24).